The sequence spans 213 residues: Orotate phosphoribosyltransferase (213 aa).

Residue K26 participates in 5-phospho-alpha-D-ribose 1-diphosphate binding. 34-35 is a binding site for orotate; the sequence is FF. Residues 72–73, R99, K100, K103, H105, and 124–132 each bind 5-phospho-alpha-D-ribose 1-diphosphate; these read YK and DDVITAGTA. T128 and R156 together coordinate orotate.

This sequence belongs to the purine/pyrimidine phosphoribosyltransferase family. PyrE subfamily. In terms of assembly, homodimer. It depends on Mg(2+) as a cofactor.

It catalyses the reaction orotidine 5'-phosphate + diphosphate = orotate + 5-phospho-alpha-D-ribose 1-diphosphate. It functions in the pathway pyrimidine metabolism; UMP biosynthesis via de novo pathway; UMP from orotate: step 1/2. In terms of biological role, catalyzes the transfer of a ribosyl phosphate group from 5-phosphoribose 1-diphosphate to orotate, leading to the formation of orotidine monophosphate (OMP). The protein is Orotate phosphoribosyltransferase of Pseudomonas putida (strain W619).